The chain runs to 155 residues: Endoribonuclease YbeY (155 aa).

Positions 114, 118, and 124 each coordinate Zn(2+).

The protein belongs to the endoribonuclease YbeY family. Zn(2+) is required as a cofactor.

The protein resides in the cytoplasm. In terms of biological role, single strand-specific metallo-endoribonuclease involved in late-stage 70S ribosome quality control and in maturation of the 3' terminus of the 16S rRNA. The sequence is that of Endoribonuclease YbeY from Escherichia coli O17:K52:H18 (strain UMN026 / ExPEC).